The chain runs to 87 residues: MCQNGAQGSFRGAPPLSKEDVIEMEGTVLENLPNAMFKVELENKHSLLCHISGRMRKNYIRILPGDKVTVQLTPYDLTKGRISYRHK.

Positions 16–87 (LSKEDVIEME…TKGRISYRHK (72 aa)) constitute an S1-like domain.

Belongs to the IF-1 family. Component of the 30S ribosomal translation pre-initiation complex which assembles on the 30S ribosome in the order IF-2 and IF-3, IF-1 and N-formylmethionyl-tRNA(fMet); mRNA recruitment can occur at any time during PIC assembly.

It localises to the cytoplasm. Its function is as follows. One of the essential components for the initiation of protein synthesis. Stabilizes the binding of IF-2 and IF-3 on the 30S subunit to which N-formylmethionyl-tRNA(fMet) subsequently binds. Helps modulate mRNA selection, yielding the 30S pre-initiation complex (PIC). Upon addition of the 50S ribosomal subunit IF-1, IF-2 and IF-3 are released leaving the mature 70S translation initiation complex. This chain is Translation initiation factor IF-1, found in Magnetococcus marinus (strain ATCC BAA-1437 / JCM 17883 / MC-1).